The primary structure comprises 404 residues: Ubiquitin-like modifier-activating enzyme 5 (404 aa).

S45 is subject to Phosphoserine. Positions 83, 104, 127, 150, and 184 each coordinate ATP. 2 residues coordinate Zn(2+): C226 and C229. C250 serves as the catalytic Glycyl thioester intermediate. The Zn(2+) site is built by C303 and C308. Positions 334 to 346 match the UFM1-interacting sequence (UIS) motif; that stretch reads IIHEDNEWGIELV. Residues 347 to 377 are linker; it reads SEISEEELKKSSGPIPDLPEGIIVAYTVPQK. S358 and S393 each carry phosphoserine. The short motif at 389-404 is the UFC1-binding sequence (UFC) element; sequence DSGESLEDLMAKMKNI.

The protein belongs to the ubiquitin-activating E1 family. UBA5 subfamily. As to quaternary structure, homodimer; homodimerization is required for UFM1 activation. Interacts (via UIS motif) with UFM1; binds UFM1 via a trans-binding mechanism in which UFM1 interacts with distinct sites in both subunits of the UBA5 homodimer. Interacts (via C-terminus) with UFC1. Interacts (via UIS motif) with GABARAPL2 and, with lower affinity, with GABARAP and GABARAPL1.

It is found in the cytoplasm. The protein localises to the nucleus. Its subcellular location is the endoplasmic reticulum membrane. It localises to the golgi apparatus. E1-like enzyme which specifically catalyzes the first step in ufmylation. Activates UFM1 by first adenylating its C-terminal glycine residue with ATP, and thereafter linking this residue to the side chain of a cysteine residue in E1, yielding a UFM1-E1 thioester and free AMP. Activates UFM1 via a trans-binding mechanism, in which UFM1 interacts with distinct sites in both subunits of the UBA5 homodimer. Trans-binding also promotes stabilization of the UBA5 homodimer, and enhances ATP-binding. Transfer of UFM1 from UBA5 to the E2-like enzyme UFC1 also takes place using a trans mechanism. Ufmylation plays a key role in various processes, such as ribosome recycling, response to DNA damage, interferon response or reticulophagy (also called ER-phagy). Ufmylation is essential for erythroid differentiation of both megakaryocytes and erythrocytes. In Bos taurus (Bovine), this protein is Ubiquitin-like modifier-activating enzyme 5.